A 348-amino-acid polypeptide reads, in one-letter code: PDZ and LIM domain protein 2 (348 aa).

In terms of domain architecture, PDZ spans 1–84 (MALTVDVVGP…PLRLQLDRPQ (84 aa)). Residues 67 to 139 (SKIRQSPSPL…PPTSPQAPTG (73 aa)) form a disordered region. Positions 103-118 (RFQSSRRTHTDSQASL) are enriched in polar residues. Residues S117, S119, and S124 each carry the phosphoserine modification. Phosphothreonine occurs at positions 128 and 132. Residues S133, S153, S191, S197, S198, S202, S209, and S262 each carry the phosphoserine modification. Residues 165 to 202 (GGRRGSRQASLSPAGDSAVLVLPPPPSPGARSSSSRLS) form a disordered region. Residues 193–202 (GARSSSSRLS) are compositionally biased toward low complexity. The segment at 249-275 (ERGGTPAYLPSSLSPQSSLPTSRALAS) is disordered. A compositionally biased stretch (low complexity) spans 257–270 (LPSSLSPQSSLPTS). Positions 280–340 (HTCEKCNTSI…EKHARQRYSA (61 aa)) constitute an LIM zinc-binding domain.

Interacts with alpha-actinins ACTN1 and ACTN4, FLNA and MYH9. Interacts (via LIM zinc-binding domain) with MKRN2.

The protein resides in the cytoplasm. It localises to the cytoskeleton. Probable adapter protein located at the actin cytoskeleton that promotes cell attachment. Necessary for the migratory capacity of epithelial cells. Overexpression enhances cell adhesion to collagen and fibronectin and suppresses anchorage independent growth. May contribute to tumor cell migratory capacity. The chain is PDZ and LIM domain protein 2 (PDLIM2) from Bos taurus (Bovine).